A 309-amino-acid polypeptide reads, in one-letter code: Taste receptor type 2 member 114 (309 aa).

At 1–7 the chain is on the extracellular side; sequence MLGAMEG. The chain crosses the membrane as a helical span at residues 8 to 28; sequence VLLSVATSEALLGIVGNTFIA. Topologically, residues 29-43 are cytoplasmic; sequence LVNCMDCTRNKNLYN. The helical transmembrane segment at 44–64 threads the bilayer; that stretch reads IGFILTGLAISRICLVWILIT. Over 65 to 87 the chain is Extracellular; that stretch reads EAYIKIFSPQLLSPINIIELISY. Residues 88-108 form a helical membrane-spanning segment; the sequence is LWIITSQLNVWFATSLSIFYF. Residues 109 to 127 are Cytoplasmic-facing; sequence LKIANFSHHIFLWLKRRIN. Residues 128 to 148 form a helical membrane-spanning segment; that stretch reads IVFAFLIGCLLMSWLFSFPVV. Residues 149–182 are Extracellular-facing; the sequence is VKMVKDKKMLYINSSWQIHMKKSELIINYVFTNG. A glycan (N-linked (GlcNAc...) asparagine) is linked at Asn161. A helical membrane pass occupies residues 183–203; sequence GVFLLFIIMLIVCFLLIISLW. At 204 to 233 the chain is on the cytoplasmic side; it reads RHSKWMQSNESGFRDLNTEVHVKTIKVLLS. The helical transmembrane segment at 234-254 threads the bilayer; that stretch reads FIILFILHLIGITINVICLLV. The Extracellular segment spans residues 255-259; the sequence is PENNL. Residues 260 to 280 form a helical membrane-spanning segment; sequence LFVFGLTIAFLYPCCHSLILI. Residues 281-309 lie on the Cytoplasmic side of the membrane; sequence LANSRLKRCFVRILQQLMCSEEGKEFRNT.

It belongs to the G-protein coupled receptor T2R family.

The protein localises to the membrane. In terms of biological role, putative taste receptor which may play a role in the perception of bitterness. In Rattus norvegicus (Rat), this protein is Taste receptor type 2 member 114.